Reading from the N-terminus, the 465-residue chain is UDP-N-acetylmuramate--L-alanine ligase (465 aa).

ATP is bound at residue 115 to 121 (GAHGKTT).

Belongs to the MurCDEF family.

The protein resides in the cytoplasm. The enzyme catalyses UDP-N-acetyl-alpha-D-muramate + L-alanine + ATP = UDP-N-acetyl-alpha-D-muramoyl-L-alanine + ADP + phosphate + H(+). It participates in cell wall biogenesis; peptidoglycan biosynthesis. Functionally, cell wall formation. The sequence is that of UDP-N-acetylmuramate--L-alanine ligase from Coxiella burnetii (strain CbuK_Q154) (Coxiella burnetii (strain Q154)).